The chain runs to 164 residues: MKSVITTTISAADAAGRYPSTSDLQSVQGNIQRAAARLEAAEKLGSNHEAVVKEAGDACFSKYGYNKNPGEAGENQEKINKCYRDIDHYMRLINYTLVVGGTGPLDEWGIAGAREVYRTLNLPSAAYIAAFVFTRDRLCIPRDMSAQAGVEFCTALDYLINSLS.

Residues asparagine 47, lysine 81, cysteine 82, arginine 84, histidine 88, arginine 137, cysteine 139, and arginine 142 each contribute to the (2R,3E)-phycoerythrobilin site.

This sequence belongs to the phycobiliprotein family. As to quaternary structure, heterododecamer of 6 alpha and 6 beta chains. The basic functional unit of phycobiliproteins is a ring-shaped hexamer formed from two back-to-back trimers contacting via the alpha chain subunits. The trimers are composed of alpha/beta subunit heterodimers arranged around a three-fold axis of symmetry. The phycoerythrins also contain a gamma subunit which is located in the center of the hexamer. Post-translationally, contains two covalently linked phycoerythrobilin chromophores. In PubMed:8876649 the authors refer to the bilins as phycoerythrobilins. In the PDB entries, the bilins are named as phycocyanobilins although the modeled compounds correspond to phycoerythrobilins.

Its subcellular location is the plastid. The protein resides in the chloroplast thylakoid membrane. In terms of biological role, light-harvesting photosynthetic tetrapyrrole chromophore-protein from the phycobiliprotein complex. In Polysiphonia urceolata (Red alga), this protein is R-phycoerythrin alpha chain (cpeA).